The sequence spans 250 residues: Ribosomal RNA small subunit methyltransferase J (250 aa).

S-adenosyl-L-methionine-binding positions include 101 to 102, 117 to 118, 153 to 154, and Asp-171; these read RD, ER, and SS.

The protein belongs to the methyltransferase superfamily. RsmJ family.

The protein resides in the cytoplasm. It catalyses the reaction guanosine(1516) in 16S rRNA + S-adenosyl-L-methionine = N(2)-methylguanosine(1516) in 16S rRNA + S-adenosyl-L-homocysteine + H(+). Functionally, specifically methylates the guanosine in position 1516 of 16S rRNA. This chain is Ribosomal RNA small subunit methyltransferase J, found in Shigella flexneri serotype 5b (strain 8401).